The chain runs to 341 residues: Guanine nucleotide-binding protein subunit beta (341 aa).

WD repeat units lie at residues 54-84 (GHLA…IVWD), 96-126 (LRSS…SIYS), 142-171 (GHTG…ALWD), 183-213 (GHTG…KLWD), 225-255 (GHES…RLFD), 269-299 (NIIC…NVWD), and 311-341 (GHDN…KIWN).

It belongs to the WD repeat G protein beta family. As to quaternary structure, g proteins are composed of 3 units, alpha, beta and gamma.

Guanine nucleotide-binding proteins (G proteins) are involved as a modulator or transducer in various transmembrane signaling systems. The beta and gamma chains are required for the GTPase activity, for replacement of GDP by GTP, and for G protein-effector interaction. The chain is Guanine nucleotide-binding protein subunit beta from Lymnaea stagnalis (Great pond snail).